Reading from the N-terminus, the 643-residue chain is Ecto-NOX disulfide-thiol exchanger 1 (643 aa).

The 80-residue stretch at 142-221 folds into the RRM domain; the sequence is KTVFVGGLPE…GRLHVDFAQA (80 aa). Coiled coils occupy residues 307–342 and 425–521; these read VQSA…LTGI and QAYA…QLKG.

This sequence belongs to the ENOX family. Requires Cu cation as cofactor.

It localises to the cell membrane. The protein localises to the secreted. It is found in the extracellular space. With respect to regulation, not inhibited by the antitumor sulfonylurea LY181984, the vabilloid capsaicin, and retinoids. In terms of biological role, probably acts as a terminal oxidase of plasma electron transport from cytosolic NAD(P)H via hydroquinones to acceptors at the cell surface. Hydroquinone oxidase activity alternates with a protein disulfide-thiol interchange/oxidoreductase activity which may control physical membrane displacements associated with vesicle budding or cell enlargement. The activities oscillate with a period length of 24 minutes and play a role in control of the ultradian cellular biological clock. The protein is Ecto-NOX disulfide-thiol exchanger 1 (Enox1) of Mus musculus (Mouse).